The sequence spans 159 residues: Aphid transmission protein (159 aa).

It belongs to the caulimoviridae ORF II family.

This protein is involved in virus transmission. In Cauliflower mosaic virus (strain CM-1841) (CaMV), this protein is Aphid transmission protein.